The chain runs to 358 residues: 3-dehydroquinate synthase (358 aa).

NAD(+)-binding positions include 70–75, 104–108, 128–129, Lys141, Lys150, and 168–171; these read DGEKFK, GVVGD, TT, and CLQT. Positions 183, 246, and 263 each coordinate Zn(2+).

Belongs to the sugar phosphate cyclases superfamily. Dehydroquinate synthase family. It depends on Co(2+) as a cofactor. Zn(2+) serves as cofactor. NAD(+) is required as a cofactor.

The protein localises to the cytoplasm. The enzyme catalyses 7-phospho-2-dehydro-3-deoxy-D-arabino-heptonate = 3-dehydroquinate + phosphate. It functions in the pathway metabolic intermediate biosynthesis; chorismate biosynthesis; chorismate from D-erythrose 4-phosphate and phosphoenolpyruvate: step 2/7. Its function is as follows. Catalyzes the conversion of 3-deoxy-D-arabino-heptulosonate 7-phosphate (DAHP) to dehydroquinate (DHQ). The protein is 3-dehydroquinate synthase of Shewanella frigidimarina (strain NCIMB 400).